The following is a 316-amino-acid chain: Ribosomal protein L11 methyltransferase (316 aa).

S-adenosyl-L-methionine is bound by residues Thr157, Gly178, Asp200, and Asn243.

The protein belongs to the methyltransferase superfamily. PrmA family.

It localises to the cytoplasm. It catalyses the reaction L-lysyl-[protein] + 3 S-adenosyl-L-methionine = N(6),N(6),N(6)-trimethyl-L-lysyl-[protein] + 3 S-adenosyl-L-homocysteine + 3 H(+). Functionally, methylates ribosomal protein L11. The polypeptide is Ribosomal protein L11 methyltransferase (Streptococcus pneumoniae serotype 4 (strain ATCC BAA-334 / TIGR4)).